The sequence spans 130 residues: MKYFTIFVFVFSLCMLGHVSGAGIRIVNELKNKKTLWMRCYSKNDVLGPTVIPNGGQFTDYFFHNLFGTTRFMCTLKQGPGFSHSQSFRAFKNSGLWDWRAREDGIYLRRIYKAKFDDGADNLHKEQSWI.

An N-terminal signal peptide occupies residues 1-21; sequence MKYFTIFVFVFSLCMLGHVSG.

Belongs to the plant self-incompatibility (S1) protein family.

Its subcellular location is the secreted. The chain is S-protein homolog 32 from Arabidopsis thaliana (Mouse-ear cress).